The following is a 216-amino-acid chain: Octanoyltransferase (216 aa).

The region spanning Q32–Q211 is the BPL/LPL catalytic domain. Residues R71–H78, A142–G144, and G155–S157 contribute to the substrate site. C173 functions as the Acyl-thioester intermediate in the catalytic mechanism.

This sequence belongs to the LipB family.

Its subcellular location is the cytoplasm. The enzyme catalyses octanoyl-[ACP] + L-lysyl-[protein] = N(6)-octanoyl-L-lysyl-[protein] + holo-[ACP] + H(+). The protein operates within protein modification; protein lipoylation via endogenous pathway; protein N(6)-(lipoyl)lysine from octanoyl-[acyl-carrier-protein]: step 1/2. Functionally, catalyzes the transfer of endogenously produced octanoic acid from octanoyl-acyl-carrier-protein onto the lipoyl domains of lipoate-dependent enzymes. Lipoyl-ACP can also act as a substrate although octanoyl-ACP is likely to be the physiological substrate. In Zymomonas mobilis subsp. mobilis (strain ATCC 31821 / ZM4 / CP4), this protein is Octanoyltransferase.